Here is a 94-residue protein sequence, read N- to C-terminus: Lipoate-protein ligase A subunit 2 (94 aa).

Heterodimer composed of LplA and LplB.

It catalyses the reaction L-lysyl-[lipoyl-carrier protein] + (R)-lipoate + ATP = N(6)-[(R)-lipoyl]-L-lysyl-[lipoyl-carrier protein] + AMP + diphosphate + H(+). It functions in the pathway protein modification; protein lipoylation via exogenous pathway; protein N(6)-(lipoyl)lysine from lipoate: step 1/2. Its pathway is protein modification; protein lipoylation via exogenous pathway; protein N(6)-(lipoyl)lysine from lipoate: step 2/2. Part of a lipoate-protein ligase complex that catalyzes both the ATP-dependent activation of exogenously supplied lipoate to lipoyl-AMP and the transfer of the activated lipoyl onto the lipoyl domains of lipoate-dependent enzymes. Can also use octanoate as substrate. This is Lipoate-protein ligase A subunit 2 (lplB) from Thermoplasma acidophilum (strain ATCC 25905 / DSM 1728 / JCM 9062 / NBRC 15155 / AMRC-C165).